A 65-amino-acid chain; its full sequence is Large ribosomal subunit protein bL28 (65 aa).

It belongs to the bacterial ribosomal protein bL28 family.

In Lachnoclostridium phytofermentans (strain ATCC 700394 / DSM 18823 / ISDg) (Clostridium phytofermentans), this protein is Large ribosomal subunit protein bL28.